The following is a 708-amino-acid chain: Protein SUPPRESSOR OF MAX2 1A (708 aa).

The disordered stretch occupies residues 248–283 (QMASKPQEKAASPPGSPVRTDLVLGPKQTETTPEKT). The EAR signature appears at 537–541 (FDLNE).

The protein belongs to the ClpA/ClpB family.

Probable component of a transcriptional corepressor complex that acts downstream of MAX2 to negatively regulate karrikins/strigolactone responses. Involved in the (-)-germacrene D signaling pathway influencing plant fitness and occurring in the stigma in a KAI2IA-dependent manner. The protein is Protein SUPPRESSOR OF MAX2 1A of Petunia hybrida (Petunia).